The following is a 64-amino-acid chain: DNA-binding protein 7d (64 aa).

An N6-methyllysine mark is found at lysine 5, lysine 7, lysine 61, lysine 63, and lysine 64.

The protein belongs to the 7 kDa DNA-binding/endoribonuclease P2 family. As to quaternary structure, monomer.

It localises to the cytoplasm. Its function is as follows. Can constrain negative DNA supercoils. May be involved in maintaining the integrity of the genome at high temperature. Stimulates the Holliday junction cleavage activity of Hjc. The protein is DNA-binding protein 7d (sso7d) of Saccharolobus solfataricus (strain ATCC 35092 / DSM 1617 / JCM 11322 / P2) (Sulfolobus solfataricus).